Consider the following 681-residue polypeptide: Proline dehydrogenase 1, mitochondrial (681 aa).

Residues 1-30 constitute a mitochondrion transit peptide; that stretch reads MALLRSLSAQRTAISLVYGRNSSKSSNSVA. Residues 76–87 are compositionally biased toward polar residues; it reads STLVQPEVVSSE. Disordered stretches follow at residues 76–113 and 216–239; these read STLVQPEVVSSETVKRSMKQESSQEKNPSPAGSPQRDP and EEAEKREVESSVSSAGDKKEEGSM. Over residues 88-99 the composition is skewed to basic and acidic residues; it reads TVKRSMKQESSQ.

This sequence belongs to the proline oxidase family. The cofactor is FAD. Most abundant in developing nervous system.

The protein localises to the mitochondrion matrix. The enzyme catalyses L-proline + a quinone = (S)-1-pyrroline-5-carboxylate + a quinol + H(+). It participates in amino-acid degradation; L-proline degradation into L-glutamate; L-glutamate from L-proline: step 1/2. In terms of biological role, converts proline to delta-1-pyrroline-5-carboxylate. Involved in the conversion of proline to glutamate, which functions as a transmitter at neuromuscular junctions. Glutamate deficiency could possibly account for reduced motor activity. The sequence is that of Proline dehydrogenase 1, mitochondrial (slgA) from Drosophila melanogaster (Fruit fly).